Reading from the N-terminus, the 380-residue chain is Cytochrome b (380 aa).

4 helical membrane passes run 34-54, 78-99, 114-134, and 179-199; these read FGSLLGICLITQIATGLFLAM, WLVRNIHANGASFFFICIYLHI, WNIGVILLFLVMATAFVGYVL, and FFAFHFLFPFLIVGASILHLL. Residues H84 and H98 each coordinate heme b. H183 and H197 together coordinate heme b. An a ubiquinone-binding site is contributed by H202. The next 4 helical transmembrane spans lie at 227 to 247, 289 to 309, 321 to 341, and 348 to 368; these read YKDTLGFLIMLMMLTLLSMLS, LGGVLALLASIMILMLIPMIH, MTQFLFWLMVSNTLILTWIGG, and FIEIGQAASILYFLLFIIFMP.

It belongs to the cytochrome b family. As to quaternary structure, the cytochrome bc1 complex contains 3 respiratory subunits (MT-CYB, CYC1 and UQCRFS1), 2 core proteins (UQCRC1 and UQCRC2) and probably 6 low-molecular weight proteins. Heme b serves as cofactor.

The protein resides in the mitochondrion inner membrane. In terms of biological role, component of the ubiquinol-cytochrome c reductase complex (complex III or cytochrome b-c1 complex) that is part of the mitochondrial respiratory chain. The b-c1 complex mediates electron transfer from ubiquinol to cytochrome c. Contributes to the generation of a proton gradient across the mitochondrial membrane that is then used for ATP synthesis. This chain is Cytochrome b (mt-cyb), found in Ranodon sibiricus (Siberian salamander).